Reading from the N-terminus, the 482-residue chain is PAN domain-containing protein At5g03700 (482 aa).

Positions 1–31 (MEGLCLNSFTRVLLLLFVFLVFSHKWQRVNA) are cleaved as a signal peptide. The PAN domain maps to 330–411 (CDKTTEFKVV…SKLGYFKVRE (82 aa)). Cystine bridges form between Cys363-Cys385 and Cys367-Cys373. A helical transmembrane segment spans residues 425 to 445 (GMSLLAVIALVLMVAMVYVGF).

It localises to the membrane. In Arabidopsis thaliana (Mouse-ear cress), this protein is PAN domain-containing protein At5g03700.